Consider the following 387-residue polypeptide: Acetylornithine deacetylase (387 aa).

His-80 serves as a coordination point for Zn(2+). Asp-82 is a catalytic residue. Asp-112 lines the Zn(2+) pocket. The active site involves Glu-144. The Zn(2+) site is built by Glu-145, Glu-169, and His-355.

It belongs to the peptidase M20A family. ArgE subfamily. Homodimer. Zn(2+) serves as cofactor. Requires Co(2+) as cofactor. The cofactor is glutathione.

It is found in the cytoplasm. It carries out the reaction N(2)-acetyl-L-ornithine + H2O = L-ornithine + acetate. Its pathway is amino-acid biosynthesis; L-arginine biosynthesis; L-ornithine from N(2)-acetyl-L-ornithine (linear): step 1/1. Catalyzes the hydrolysis of the amide bond of N(2)-acetylated L-amino acids. Cleaves the acetyl group from N-acetyl-L-ornithine to form L-ornithine, an intermediate in L-arginine biosynthesis pathway, and a branchpoint in the synthesis of polyamines. The protein is Acetylornithine deacetylase of Proteus mirabilis (strain HI4320).